Here is a 620-residue protein sequence, read N- to C-terminus: Putative ribonuclease H protein At1g65750 (620 aa).

The region spanning C456–S586 is the RNase H type-1 domain. Mg(2+) contacts are provided by D465, E505, D529, and D578.

Mg(2+) is required as a cofactor.

The enzyme catalyses Endonucleolytic cleavage to 5'-phosphomonoester.. The protein is Putative ribonuclease H protein At1g65750 of Arabidopsis thaliana (Mouse-ear cress).